We begin with the raw amino-acid sequence, 365 residues long: Alanine racemase (365 aa).

Lysine 35 functions as the Proton acceptor; specific for D-alanine in the catalytic mechanism. The residue at position 35 (lysine 35) is an N6-(pyridoxal phosphate)lysine. Arginine 130 serves as a coordination point for substrate. Residue tyrosine 256 is the Proton acceptor; specific for L-alanine of the active site. Methionine 304 contributes to the substrate binding site.

It belongs to the alanine racemase family. The cofactor is pyridoxal 5'-phosphate.

The catalysed reaction is L-alanine = D-alanine. The protein operates within amino-acid biosynthesis; D-alanine biosynthesis; D-alanine from L-alanine: step 1/1. In terms of biological role, catalyzes the interconversion of L-alanine and D-alanine. May also act on other amino acids. The protein is Alanine racemase (alr) of Polaromonas naphthalenivorans (strain CJ2).